We begin with the raw amino-acid sequence, 336 residues long: HTH-type transcriptional repressor PurR (336 aa).

Residues 2–56 (ATIKDVAKLAGVSTTTVSHVINKTRFVAEDTSKAVWDAIQQLNYSPSAVARSLKV) enclose the HTH lacI-type domain. The segment at residues 4-23 (IKDVAKLAGVSTTTVSHVIN) is a DNA-binding region (H-T-H motif). The DNA-binding element occupies 48 to 56 (SAVARSLKV). Tyr73, Lys188, Phe219, and Asp273 together coordinate hypoxanthine.

As to quaternary structure, homodimer.

Its pathway is purine metabolism; purine nucleotide biosynthesis [regulation]. Its function is as follows. Is the main repressor of the genes involved in the de novo synthesis of purine nucleotides, regulating purB, purC, purEK, purF, purHD, purL, purMN and guaBA expression. PurR is allosterically activated to bind its cognate DNA by binding the purine corepressors, hypoxanthine or guanine, thereby effecting transcription repression. This chain is HTH-type transcriptional repressor PurR, found in Actinobacillus pleuropneumoniae serotype 3 (strain JL03).